Reading from the N-terminus, the 382-residue chain is MTEQRPLTIALVAGETSGDILGAGLIRALKERVPNARFVGVAGPRMQAEGCEAWYEMEELAVMGIVEVLGRLRRLLHIRADLTKRFGELKPDIFVGIDAPDFNITLEGNLKKQGIKTIHYVSPSVWAWRQKRVFKIGRATDLVLAFLPFEKAFYDKYNVPCRFIGHTMADAMPLDPDKNAARDVLGIPHDAHCLALLPGSRGAEVEMLSADFLKTAQLLRQTYPDLEIVVPLVNAKRREQFERIKAEVAPDLSVHLLDGMGREAMVASDAALLASGTAALECMLAKCPMVVGYRMKPFTFWLAKRLVKTDYVSLPNLLAGRELVKELLQEECEPQKLAAALLPLLANGKTSHAMHDTFRELHQQIRCNADEQAAQAVLELAQ.

The protein belongs to the LpxB family.

It catalyses the reaction 2-N,3-O-bis[(3R)-3-hydroxytetradecanoyl]-alpha-D-glucosaminyl 1-phosphate + UDP-2-N,3-O-bis[(3R)-3-hydroxytetradecanoyl]-alpha-D-glucosamine = lipid A disaccharide (E. coli) + UDP + H(+). It carries out the reaction a lipid X + a UDP-2-N,3-O-bis[(3R)-3-hydroxyacyl]-alpha-D-glucosamine = a lipid A disaccharide + UDP + H(+). The protein operates within glycolipid biosynthesis; lipid IV(A) biosynthesis; lipid IV(A) from (3R)-3-hydroxytetradecanoyl-[acyl-carrier-protein] and UDP-N-acetyl-alpha-D-glucosamine: step 5/6. In terms of biological role, condensation of UDP-2,3-diacylglucosamine and 2,3-diacylglucosamine-1-phosphate to form lipid A disaccharide, a precursor of lipid A, a phosphorylated glycolipid that anchors the lipopolysaccharide to the outer membrane of the cell. In Escherichia coli O8 (strain IAI1), this protein is Lipid-A-disaccharide synthase.